A 316-amino-acid polypeptide reads, in one-letter code: tRNA dimethylallyltransferase (316 aa).

17–24 (GPTASGKT) is an ATP binding site. 19 to 24 (TASGKT) provides a ligand contact to substrate. Interaction with substrate tRNA stretches follow at residues 42-45 (DSAL), 166-170 (QRLSR), and 247-252 (RCVGYR).

It belongs to the IPP transferase family. Monomer. The cofactor is Mg(2+).

The catalysed reaction is adenosine(37) in tRNA + dimethylallyl diphosphate = N(6)-dimethylallyladenosine(37) in tRNA + diphosphate. Functionally, catalyzes the transfer of a dimethylallyl group onto the adenine at position 37 in tRNAs that read codons beginning with uridine, leading to the formation of N6-(dimethylallyl)adenosine (i(6)A). This is tRNA dimethylallyltransferase from Citrobacter koseri (strain ATCC BAA-895 / CDC 4225-83 / SGSC4696).